Here is a 176-residue protein sequence, read N- to C-terminus: Adipose-secreted signaling protein (176 aa).

A disordered region spans residues Met-1–Thr-30. A compositionally biased stretch (polar residues) spans Glu-20–Thr-30.

The protein belongs to the ADISSP family.

In terms of biological role, may be involved in thermogenesis and glucose homeostasis. This is Adipose-secreted signaling protein from Taeniopygia guttata (Zebra finch).